Reading from the N-terminus, the 2126-residue chain is Serine/threonine-protein kinase WNK1 (2126 aa).

2 disordered regions span residues 1 to 80 (MSDG…FFRR) and 93 to 202 (LPGL…QQQD). Phosphoserine is present on serine 17. Residues 48-64 (RTEEYRRRRHTMDKDSR) are compositionally biased toward basic and acidic residues. Phosphothreonine is present on threonine 58. Composition is skewed to low complexity over residues 101–111 (PQPSVPAVVPQ) and 127–141 (VASQ…AASP). A phosphoserine mark is found at serine 165 and serine 172. The Protein kinase domain maps to 221-479 (LKFDIEIGRG…IKDLLNHAFF (259 aa)). Residue serine 231 coordinates ATP. The chloride site is built by phenylalanine 283 and leucine 299. ATP-binding positions include 301 to 304 (TELM) and lysine 351. The active-site Proton acceptor is the aspartate 368. The chloride site is built by leucine 369 and leucine 371. 2 positions are modified to phosphoserine; by autocatalysis: serine 378 and serine 382. Positions 488–555 (ELAEEDDGEK…VCEGDHKTMA (68 aa)) are autoinhibitory domain. Residues 573–588 (QLVREEQEKRKQEESS) show a composition bias toward basic and acidic residues. Residues 573-865 (QLVREEQEKR…SRHEKTSRPK (293 aa)) form a disordered region. A compositionally biased stretch (polar residues) spans 593 to 614 (NEQQASVSQAGIQPLSVASTGI). The segment covering 615–626 (PTAPTTSASVST) has biased composition (low complexity). Positions 629 to 639 (EPEEPEADQHQ) are interaction with KLHL3. Composition is skewed to polar residues over residues 638-682 (HQQL…GSQH), 695-705 (TVSSIQAQSQP), and 713-733 (SMAQ…VLSS). Over residues 734-746 (QPVQHPQQQGIQP) the composition is skewed to low complexity. Polar residues predominate over residues 750 to 789 (PQQAVQYSLPQAASSSEGTVQPVSQPQVSAGTQSSTQGVS). Residues 793–823 (PPEQTPITQSQPTQPVPLVSSVDSAHSDVAS) are compositionally biased toward low complexity. Positions 826–836 (SDGNENAPSSS) are enriched in polar residues. Residues 844-865 (TKRHYRKSVRSRSRHEKTSRPK) are compositionally biased toward basic residues. Residues 1003-1006 (RFIV) carry the RFXV motif 1 motif. Phosphoserine is present on serine 1007. 2 disordered regions span residues 1474–1507 (GQVS…LTKT) and 1557–1595 (IPVT…ASSS). Over residues 1477–1496 (STPGTHASAPASTATGAKPG) the composition is skewed to low complexity. Residues 1567–1583 (STMSSTAVTEAGSQPQK) show a composition bias toward polar residues. An RFXV motif 2 motif is present at residues 1604-1607 (RFQV). Residues 1610-1695 (TMDDAQKERK…TKVGRFQVTT (86 aa)) form a disordered region. Over residues 1613–1629 (DAQKERKNRSEDTKSVH) the composition is skewed to basic and acidic residues. Low complexity predominate over residues 1632-1650 (SSTSESSVLSSSSPESTLV). Short sequence motifs (RFXV motif) lie at residues 1690–1693 (RFQV) and 1702–1705 (RFSV). Residues 1709–1719 (EDKVTELKKEG) show a composition bias toward basic and acidic residues. Disordered stretches follow at residues 1709–1783 (EDKV…LCSK), 1856–1940 (VIIP…NLYS), and 1952–1990 (SLSA…KGTF). Serine 1723 bears the Phosphoserine mark. Over residues 1738 to 1747 (PKKEKPELAE) the composition is skewed to basic and acidic residues. Phosphoserine is present on residues serine 1755, serine 1756, serine 1771, serine 1773, serine 1776, and serine 1865. Basic residues predominate over residues 1866–1878 (GRRRRPTKSKGSK). Over residues 1879 to 1889 (SSRSSSLGNKS) the composition is skewed to low complexity. The segment covering 1890-1940 (PQLSGNLSGQSGTSVLNPQQTLHPPGNTPETGHNQLLQPLKPSPSSDNLYS) has biased composition (polar residues). Over residues 1957–1981 (GQGTSSTNTVGGTVSSQAAQAQPPA) the composition is skewed to low complexity. The segment at 1985–2005 (SRKGTFTDDLHKLVDNWARDA) is amphipathic alpha-helix. 2 positions are modified to phosphoserine: serine 2014 and serine 2030. Residues 2076–2097 (PFGTQWSGTGGPAPQPLGQFQP) are disordered. Phosphoserine occurs at positions 2114 and 2116.

The protein belongs to the protein kinase superfamily. Ser/Thr protein kinase family. WNK subfamily. Interacts with WNK3. Interacts with WNK4; inhibiting the activity of WNK4. Interacts with SGK1; promoting its activation. Associates with the mTORC2 complex. Interacts with UVRAG. Interacts (via amphipathic alpha-helix region) with EMC2; promoting the ER membrane protein complex assembly. In terms of assembly, interacts with isoform 1; inhibiting isoform 1 activity. Mg(2+) is required as a cofactor. Autophosphorylated at Ser-378 and Ser-382, promoting its activity. Autophosphorylation at Ser-382 is inhibited by intracellular calcium. Phosphorylation at Thr-58 increases ability to activate SGK1. In terms of processing, ubiquitinated by the BCR(KLHL3) complex, leading to its degradation. Also ubiquitinated by the BCR(KLHL2) complex. Post-translationally, may be O-glycosylated.

It localises to the cytoplasm. The protein localises to the nucleus. Its subcellular location is the cytoskeleton. It is found in the spindle. The catalysed reaction is L-seryl-[protein] + ATP = O-phospho-L-seryl-[protein] + ADP + H(+). The enzyme catalyses L-threonyl-[protein] + ATP = O-phospho-L-threonyl-[protein] + ADP + H(+). Activated in response to hyperosmotic stress: cell shrinkage promotes formation of a membraneless compartment that concentrates WNK1 with its substrates, OXSR1/OSR1 and STK39/SPAK. Activation requires autophosphorylation of Ser-382 and, to a lower extent, Ser-378. Autophosphorylation and subsequent activation is inhibited by increases in intracellular ionic strength: Cl(-) potently inhibits WNK1 kinase activity via direct binding. Also inhibited by K(+) ions. Inhibited by Compound 12 ((5-Chloro-2-(2-((methyl-d3)amino)thiazol-4-yl)- pyridin-4-yl)(4-(4-chlorobenzyl)piperazin-1-yl)methanone). Functionally, serine/threonine-protein kinase component of the WNK1-SPAK/OSR1 kinase cascade, which acts as a key regulator of blood pressure and regulatory volume increase by promoting ion influx. WNK1 mediates regulatory volume increase in response to hyperosmotic stress by acting as a molecular crowding sensor, which senses cell shrinkage and mediates formation of a membraneless compartment by undergoing liquid-liquid phase separation. The membraneless compartment concentrates WNK1 with its substrates, OXSR1/OSR1 and STK39/SPAK, promoting WNK1-dependent phosphorylation and activation of downstream kinases OXSR1/OSR1 and STK39/SPAK. Following activation, OXSR1/OSR1 and STK39/SPAK catalyze phosphorylation of ion cotransporters SLC12A1/NKCC2, SLC12A2/NKCC1, SLC12A5/KCC2 and SLC12A6/KCC3, regulating their activity. Phosphorylation of Na-K-Cl cotransporters SLC12A2/NKCC1 and SLC12A2/NKCC1 promote their activation and ion influx; simultaneously, phosphorylation of K-Cl cotransporters SLC12A5/KCC2 and SLC12A6/KCC3 inhibit their activity, blocking ion efflux. Also acts as a regulator of angiogenesis in endothelial cells. Also acts independently of the WNK1-SPAK/OSR1 kinase cascade by catalyzing phosphorylation of other substrates, such as SYT2, PCF11 and NEDD4L. Mediates phosphorylation of SYT2, regulating SYT2 association with phospholipids and membrane-binding. Regulates mRNA export in the nucleus by mediating phosphorylation of PCF11, thereby decreasing the association between PCF11 and POLR2A/RNA polymerase II and promoting mRNA export to the cytoplasm. Acts as a negative regulator of autophagy. Required for the abscission step during mitosis, independently of the WNK1-SPAK/OSR1 kinase cascade. WNK1 may also play a role in actin cytoskeletal reorganization. Also acts as a scaffold protein independently of its protein kinase activity: negatively regulates cell membrane localization of various transporters and channels, such as SLC4A4, SLC26A6, SLC26A9, TRPV4 and CFTR. Involved in the regulation of epithelial Na(+) channel (ENaC) by promoting activation of SGK1 in a kinase-independent manner. Probably activates SGK1 by acting as a scaffold protein that promotes the recruitment of SGK1 to the mTORC2 complex in response to chloride, leading to mTORC2-dependent phosphorylation and activation of SGK1. Acts as an assembly factor for the ER membrane protein complex independently of its protein kinase activity: associates with EMC2 in the cytoplasm via its amphipathic alpha-helix, and prevents EMC2 ubiquitination and subsequent degradation, thereby promoting EMC2 stabilization. Kinase-defective isoform specifically expressed in kidney, which acts as a dominant-negative regulator of the longer isoform 1. Does not directly inhibit WNK4 and has no direct effect on sodium and chloride ion transport. Down-regulates sodium-chloride cotransporter activity indirectly by inhibiting isoform 1, it associates with isoform 1 and attenuates its kinase activity. In kidney, may play an important role regulating sodium and potassium balance. Its function is as follows. Kinase-defective isoform produced by alternative promoter usage and alternative splicing. The sequence is that of Serine/threonine-protein kinase WNK1 from Rattus norvegicus (Rat).